Consider the following 75-residue polypeptide: Penaeidin-3m (75 aa).

The first 19 residues, 1–19 (MRLVVCLVFLASFALVCQG), serve as a signal peptide directing secretion. Glutamine 20 carries the pyrrolidone carboxylic acid modification. 3 cysteine pairs are disulfide-bonded: cysteine 44–cysteine 59, cysteine 48–cysteine 66, and cysteine 60–cysteine 67. The residue at position 74 (serine 74) is a Serine amide.

This sequence belongs to the penaeidin family.

It is found in the cytoplasmic granule. Antibacterial and antifungal activity. Presents chitin-binding activity. This is Penaeidin-3m from Penaeus setiferus (Atlantic white shrimp).